Here is a 529-residue protein sequence, read N- to C-terminus: uncharacterized protein (529 aa).

ATP-binding positions include 178–186 (TSGTTGQPK), Asp401, Arg416, and Lys510.

The protein belongs to the ATP-dependent AMP-binding enzyme family.

This is an uncharacterized protein from Bacillus subtilis (strain 168).